The chain runs to 78 residues: UPF0369 protein RF_1112 (78 aa).

Belongs to the SDHAF4 family.

This chain is UPF0369 protein RF_1112, found in Rickettsia felis (strain ATCC VR-1525 / URRWXCal2) (Rickettsia azadi).